The following is a 398-amino-acid chain: Acetate kinase (398 aa).

N10 is a binding site for Mg(2+). ATP is bound at residue K17. Position 89 (R89) interacts with substrate. The Proton donor/acceptor role is filled by D148. Residues 208-212 (HLGNG), 283-285 (DCR), and 331-335 (GIGEN) contribute to the ATP site. E385 serves as a coordination point for Mg(2+).

Belongs to the acetokinase family. In terms of assembly, homodimer. It depends on Mg(2+) as a cofactor. Mn(2+) is required as a cofactor.

Its subcellular location is the cytoplasm. The enzyme catalyses acetate + ATP = acetyl phosphate + ADP. It participates in metabolic intermediate biosynthesis; acetyl-CoA biosynthesis; acetyl-CoA from acetate: step 1/2. Functionally, catalyzes the formation of acetyl phosphate from acetate and ATP. Can also catalyze the reverse reaction. The sequence is that of Acetate kinase from Histophilus somni (strain 129Pt) (Haemophilus somnus).